The chain runs to 342 residues: Glutamyl endopeptidase (342 aa).

The N-terminal stretch at Met-1 to Ala-29 is a signal peptide. The propeptide occupies Leu-30–Asn-68. The disordered stretch occupies residues Lys-33–Gln-63. Residues Pro-39–Pro-50 are compositionally biased toward low complexity. Active-site charge relay system residues include His-119, Asp-161, and Ser-237. Residues Phe-283–Ala-342 are disordered. The segment covering Asp-286–Ala-342 has biased composition (low complexity). Tandem repeats lie at residues Pro-289–Asn-291, Pro-292–Asn-294, Pro-295–Asn-297, Pro-298–Asn-300, Pro-301–Asn-303, Pro-304–Asn-306, Pro-307–Asn-309, Pro-310–Asn-312, Pro-316–Asn-318, Pro-319–Asn-321, Pro-322–Asn-324, Pro-325–Asn-327, and Pro-328–Asn-330. The interval Pro-289 to Asn-330 is 13 X 3 AA repeats of P-[DN]-N.

The protein belongs to the peptidase S1B family. Post-translationally, proteolytically cleaved by aureolysin (aur). This cleavage leads to the activation of SspA.

Its subcellular location is the secreted. The enzyme catalyses Preferential cleavage: Glu-|-Xaa, Asp-|-Xaa.. In terms of biological role, preferentially cleaves peptide bonds on the carboxyl-terminal side of aspartate and glutamate. Along with other extracellular proteases it is involved in colonization and infection of human tissues. Required for proteolytic maturation of thiol protease SspB and inactivation of SspC, an inhibitor of SspB. It is the most important protease for degradation of fibronectin-binding protein (FnBP) and surface protein A, which are involved in adherence to host cells. May also protect bacteria against host defense mechanism by cleaving the immunoglobulin classes IgG, IgA and IgM. May be involved in the stability of secreted lipases. The protein is Glutamyl endopeptidase (sspA) of Staphylococcus aureus (strain Mu50 / ATCC 700699).